Consider the following 489-residue polypeptide: L-arabinose isomerase (489 aa).

Positions 300, 325, 342, and 441 each coordinate Mn(2+).

The protein belongs to the arabinose isomerase family. Mn(2+) is required as a cofactor.

It catalyses the reaction beta-L-arabinopyranose = L-ribulose. Its pathway is carbohydrate degradation; L-arabinose degradation via L-ribulose; D-xylulose 5-phosphate from L-arabinose (bacterial route): step 1/3. Catalyzes the conversion of L-arabinose to L-ribulose. In Clostridium beijerinckii (strain ATCC 51743 / NCIMB 8052) (Clostridium acetobutylicum), this protein is L-arabinose isomerase.